A 98-amino-acid chain; its full sequence is DNA-binding protein Fis (98 aa).

Residues 74–93 constitute a DNA-binding region (H-T-H motif); it reads QTRAAQMMGINRGTLRKKLK.

The protein belongs to the transcriptional regulatory Fis family. Homodimer.

Activates ribosomal RNA transcription. Plays a direct role in upstream activation of rRNA promoters. This chain is DNA-binding protein Fis, found in Proteus hauseri.